The primary structure comprises 83 residues: MAKGKANLNLTYEAAIGRLEEVVRSLETGEASLDESLKLFQEGIGLVRHCHSQLDAYEAKVQRLIETPDGAAVVEERRTEEGE.

This sequence belongs to the XseB family. In terms of assembly, heterooligomer composed of large and small subunits.

It is found in the cytoplasm. The enzyme catalyses Exonucleolytic cleavage in either 5'- to 3'- or 3'- to 5'-direction to yield nucleoside 5'-phosphates.. In terms of biological role, bidirectionally degrades single-stranded DNA into large acid-insoluble oligonucleotides, which are then degraded further into small acid-soluble oligonucleotides. The protein is Exodeoxyribonuclease 7 small subunit of Heliobacterium modesticaldum (strain ATCC 51547 / Ice1).